The chain runs to 248 residues: mRNA-decapping protein OPG122 (248 aa).

Residues 45–227 (HKRVSVSAIL…IAKYALDTAK (183 aa)) enclose the Nudix hydrolase domain. The short motif at 126–147 (GIPKRGENVPECLSREIKEEVN) is the Nudix box element. A Mg(2+)-binding site is contributed by glutamate 132. The Nucleophile role is filled by glutamate 141. Glutamate 145 lines the Mn(2+) pocket. Residue aspartate 167 coordinates Mg(2+).

This sequence belongs to the Nudix hydrolase family. The cofactor is Mg(2+). Requires Mn(2+) as cofactor.

The protein resides in the host mitochondrion. In terms of biological role, decapping enzyme that remove the protective 5'-cap from both host and viral mRNAs to commit transcripts for decay by the cellular exonuclease XRN1. Preferentially targets spliced mRNAs and since all viral genes are intronless, it preferentially targets host over viral transcripts. Acceleration of the turnover of cellular transcripts promotes the shutoff of host protein synthesis and therefore diminish the magnitude of antiviral response. In Vaccinia virus (strain Copenhagen) (VACV), this protein is mRNA-decapping protein OPG122 (OPG122).